We begin with the raw amino-acid sequence, 375 residues long: Alpha-2,8-sialyltransferase 8B (375 aa).

The Cytoplasmic portion of the chain corresponds to 1–6 (MQLQFR). A helical; Signal-anchor for type II membrane protein transmembrane segment spans residues 7–23 (SWMLAALTLLVVFLIFA). Over 24-375 (DISEIEEEIG…LTVGQCDGAT (352 aa)) the chain is Lumenal. Residues Asn-60, Asn-72, Asn-89, and Asn-134 are each glycosylated (N-linked (GlcNAc...) asparagine). Cystine bridges form between Cys-157/Cys-307 and Cys-171/Cys-371. Residues Asn-162 and Asn-185 each coordinate CMP-N-acetyl-beta-neuraminate. N-linked (GlcNAc...) asparagine glycans are attached at residues Asn-219 and Asn-234. The CMP-N-acetyl-beta-neuraminate site is built by Thr-294, Thr-295, Gly-296, Trp-316, Tyr-329, and His-330. The Proton donor/acceptor role is filled by His-346.

The protein belongs to the glycosyltransferase 29 family. In terms of processing, autopolysialylated. Autopolysialylation is not a prerequisite for the polysialylation acitity, but enhances the polysialylation acitity. In terms of tissue distribution, highly expressed in fetal brain, kidney and heart and to a much lesser extent in adult heart and thymus.

The protein localises to the golgi apparatus membrane. Its subcellular location is the secreted. It localises to the cell membrane. It catalyses the reaction [N-acetyl-alpha-D-neuraminosyl-(2-&gt;8)](n) + CMP-N-acetyl-beta-neuraminate = [N-acetyl-alpha-D-neuraminosyl-(2-&gt;8)](n+1) + CMP + H(+). It functions in the pathway protein modification; protein glycosylation. In terms of biological role, catalyzes the transfer of a sialic acid from a CMP-linked sialic acid donor onto a terminal alpha-2,3-, alpha-2,6-, or alpha-2,8-linked sialic acid of an N-linked glycan acceptor through alpha-2,8-linkages. Therefore, participates in polysialic acid synthesis on various sialylated N-acetyllactosaminyl oligosaccharides (alpha-2,3-, alpha-2,6-, or alpha-2,8-linked sialic acid), including NCAM1, NCAM1 N-glycans, FETUB N-glycans, and to a lesser extent sialylparagloboside (SPG) and AHSG, which does not require the initial addition of an alpha 2,8-sialic acid. However, does not exhibit sialic acid-polymerase activity. Catalyzes polysialic acid synthesis in the hippocampal on NCAM1 and supports neurite outgrowth. ST8SIA2-mediated polysialylation influences on oligodendrocyte differentiation and may promote the integrity of myelin and axons. The protein is Alpha-2,8-sialyltransferase 8B of Homo sapiens (Human).